Reading from the N-terminus, the 1006-residue chain is Probable sulfite reductase [NADPH] flavoprotein component (1006 aa).

The FAD-binding FR-type domain occupies 622–852 (EKVFTVHVRA…AVKTSVMKLP (231 aa)). FAD is bound by residues 658–669 (YDIGEALGVYGV) and 788–798 (IKRREYSISSS).

FAD is required as a cofactor. Requires FMN as cofactor.

The enzyme catalyses hydrogen sulfide + 3 NADP(+) + 3 H2O = sulfite + 3 NADPH + 4 H(+). Its pathway is sulfur metabolism; hydrogen sulfide biosynthesis; hydrogen sulfide from sulfite (NADPH route): step 1/1. Its function is as follows. This enzyme catalyzes the 6-electron reduction of sulfite to sulfide. This is one of several activities required for the biosynthesis of L-cysteine from sulfate. The protein is Probable sulfite reductase [NADPH] flavoprotein component of Schizosaccharomyces pombe (strain 972 / ATCC 24843) (Fission yeast).